The primary structure comprises 385 residues: MPPQIKHDLNRSGWEATDFPSVCENCLPENPYVKMLKEDYGAECKLCTRPFTVFSWAADRAHARKKRTNICLTCARLKNACQCCILDLQFGLPIIIRDKALELVAPGPQSEINREYFAQNNERAIEEGRAGVEEYEKADEKARELLRRLAQSKPYFRKGREVDEEGNPVNGSSSGAGRATGGNPAVGAGVGGVGPIRTRDSRAAAAAGARPGGGRRPNAAPAPPPGPKDWLPPADKSIMSLFVTGIEDDLPEFKIRDFFKAFGKIKSLVVSHMSHAAFVNYETREAAEKASAECKGRAVIAGCPLRVRWSVPKALGTMNKEQRSEMLRDGRSAFGSGQKTGGQKAIGGQNAQGGASGAQKDDASNLTIAAPPGAADVQYASLSGN.

The segment at Arg157 to Pro233 is disordered. Over residues Gly171–Gly187 the composition is skewed to low complexity. The region spanning Met239–Pro312 is the RRM domain. Residues Lys320–Arg331 show a composition bias toward basic and acidic residues. Residues Lys320–Ala370 are disordered.

It belongs to the SLT11 family. As to quaternary structure, associated with the spliceosome.

Its subcellular location is the nucleus. Its function is as follows. Involved in pre-mRNA splicing. Facilitates the cooperative formation of U2/U6 helix II in association with stem II in the spliceosome. Binds to RNA. This Neurospora crassa (strain ATCC 24698 / 74-OR23-1A / CBS 708.71 / DSM 1257 / FGSC 987) protein is Pre-mRNA-splicing factor slt-11 (slt-11).